Consider the following 155-residue polypeptide: Small ribosomal subunit protein uS7cz/uS7cy (155 aa).

Belongs to the universal ribosomal protein uS7 family. As to quaternary structure, part of the 30S ribosomal subunit.

The protein localises to the plastid. Its subcellular location is the chloroplast. Functionally, one of the primary rRNA binding proteins, it binds directly to 16S rRNA where it nucleates assembly of the head domain of the 30S subunit. This is Small ribosomal subunit protein uS7cz/uS7cy (rps7-A) from Jasminum nudiflorum (Winter jasmine).